We begin with the raw amino-acid sequence, 389 residues long: Ecto-ADP-ribosyltransferase 3 (389 aa).

The signal sequence occupies residues 1–26; it reads MKTGHFEIVTMLLATMILVDIFQVKA. A disulfide bridge connects residues cysteine 43 and cysteine 256. The TR mART core domain occupies 64–251; it reads QQLDTVWENA…LILQSINKTC (188 aa). 2 residues coordinate NAD(+): tyrosine 101 and arginine 163. Asparagine 248 carries N-linked (GlcNAc...) asparagine glycosylation. A run of 3 repeats spans residues 283-292, 293-302, and 303-312. A 3 X 10 AA tandem repeats of [GS]-E-K-N-[QW]-K-L-E-D-H region spans residues 283 to 312; it reads GEKNQKLEDHSEKNWKLEDHGEKNQKLEDH. Positions 325–362 are disordered; it reads MKIPEPFPLPEDKSQGNINNPTPGPVPVPGPKSHPSAS. Residue threonine 346 is glycosylated (O-linked (GalNAc...) threonine). Pro residues predominate over residues 346–356; it reads TPGPVPVPGPK. A lipid anchor (GPI-anchor amidated serine) is attached at serine 362. A propeptide spans 363–389 (removed in mature form); it reads SGKLLLPQFGMVIILISVSAINLFVAL.

This sequence belongs to the Arg-specific ADP-ribosyltransferase family. In terms of processing, O-glycosylated with core 1 or possibly core 8 glycans. Testis specific.

The protein localises to the cell membrane. It catalyses the reaction L-arginyl-[protein] + NAD(+) = N(omega)-(ADP-D-ribosyl)-L-arginyl-[protein] + nicotinamide + H(+). This chain is Ecto-ADP-ribosyltransferase 3 (ART3), found in Homo sapiens (Human).